A 500-amino-acid polypeptide reads, in one-letter code: 7-alpha-hydroxycholest-4-en-3-one 12-alpha-hydroxylase (500 aa).

The chain crosses the membrane as a helical span at residues 2 to 21 (VLWGLLGALLMVMVGWLCLP). Serine 325 is modified (phosphoserine). Residue cysteine 439 participates in heme binding.

The protein belongs to the cytochrome P450 family. Requires heme as cofactor. As to expression, liver (at protein level).

The protein resides in the endoplasmic reticulum membrane. Its subcellular location is the microsome membrane. It carries out the reaction 7alpha-hydroxycholest-4-en-3-one + reduced [NADPH--hemoprotein reductase] + O2 = 7alpha,12alpha-dihydroxycholest-4-en-3-one + oxidized [NADPH--hemoprotein reductase] + H2O + H(+). The enzyme catalyses 5beta-cholestane-3alpha,7alpha-diol + reduced [NADPH--hemoprotein reductase] + O2 = 5beta-cholestane-3alpha,7alpha,12alpha-triol + oxidized [NADPH--hemoprotein reductase] + H2O + H(+). The catalysed reaction is chenodeoxycholate + reduced [NADPH--hemoprotein reductase] + O2 = cholate + oxidized [NADPH--hemoprotein reductase] + H2O + H(+). It functions in the pathway lipid metabolism; bile acid biosynthesis. Up-regulated upon treatment with streptozotocin. A cytochrome P450 monooxygenase involved in primary bile acid biosynthesis. Catalyzes the 12alpha-hydroxylation of 7alpha-hydroxy-4-cholesten-3-one, an intermediate metabolite in cholic acid biosynthesis. Controls biliary balance of cholic acid and chenodeoxycholic acid, ultimately regulating the intestinal absorption of dietary lipids. Mechanistically, uses molecular oxygen inserting one oxygen atom into a substrate, and reducing the second into a water molecule, with two electrons provided by NADPH via cytochrome P450 reductase (CPR; NADPH--hemoprotein reductase). The sequence is that of 7-alpha-hydroxycholest-4-en-3-one 12-alpha-hydroxylase (CYP8B1) from Oryctolagus cuniculus (Rabbit).